The sequence spans 604 residues: Aspartate--tRNA(Asp/Asn) ligase (604 aa).

Glu187 is an L-aspartate binding site. The tract at residues 211-214 is aspartate; it reads QQFK. The L-aspartate site is built by Arg233 and His461. 233–235 serves as a coordination point for ATP; it reads RDE. Glu495 contacts ATP. Arg502 lines the L-aspartate pocket. 547–550 provides a ligand contact to ATP; that stretch reads GLDR.

The protein belongs to the class-II aminoacyl-tRNA synthetase family. Type 1 subfamily. In terms of assembly, homodimer.

The protein resides in the cytoplasm. The catalysed reaction is tRNA(Asx) + L-aspartate + ATP = L-aspartyl-tRNA(Asx) + AMP + diphosphate. Functionally, aspartyl-tRNA synthetase with relaxed tRNA specificity since it is able to aspartylate not only its cognate tRNA(Asp) but also tRNA(Asn). Reaction proceeds in two steps: L-aspartate is first activated by ATP to form Asp-AMP and then transferred to the acceptor end of tRNA(Asp/Asn). In Chlorobium luteolum (strain DSM 273 / BCRC 81028 / 2530) (Pelodictyon luteolum), this protein is Aspartate--tRNA(Asp/Asn) ligase.